A 44-amino-acid polypeptide reads, in one-letter code: uncharacterized protein (44 aa).

This is an uncharacterized protein from Saccharomyces cerevisiae (strain ATCC 204508 / S288c) (Baker's yeast).